A 296-amino-acid chain; its full sequence is Zinc finger protein 75A (296 aa).

One can recognise a KRAB domain in the interval 1-66; it reads MYFSQEEWEL…VSPEFKDSAG (66 aa). 5 C2H2-type zinc fingers span residues 161–183, 189–211, 217–239, 245–267, and 273–295; these read FKCQECGKTFRVSSDLIKHQRIH, YKCQQCDKRFRWSSDLNKHLTTH, YKCSWCGKSFSQNTNLHTHQRTH, FTCHECGKKFSQNSHLIKHRRTH, and YTCSICRRNFSRRSSLLRHQKLH.

This sequence belongs to the krueppel C2H2-type zinc-finger protein family.

The protein resides in the nucleus. Functionally, may be involved in transcriptional regulation. The sequence is that of Zinc finger protein 75A (ZNF75A) from Homo sapiens (Human).